A 791-amino-acid chain; its full sequence is Protein CLASP-2 (791 aa).

3 stretches are compositionally biased toward low complexity: residues 259-271 (ASDAASSSTSVNS), 323-334 (RTPNTRPMTTRT), and 372-381 (SQPGSRNGSP). Disordered stretches follow at residues 259-283 (ASDAASSSTSVNSERGSAPFRSKLS), 315-391 (TRMT…TGTL), and 422-454 (AMNTAKESLGQPSRTEDDEFLLPKRKPKTPQKS). The segment covering 422-434 (AMNTAKESLGQPS) has biased composition (polar residues).

The protein belongs to the CLASP family. Interacts with hcp-1 and hcp-2.

It localises to the cytoplasm. The protein localises to the cytoskeleton. Its subcellular location is the microtubule organizing center. It is found in the centrosome. The protein resides in the chromosome. It localises to the centromere. The protein localises to the kinetochore. Its subcellular location is the spindle. In terms of biological role, probable microtubule plus-end tracking protein that promotes the stabilization of dynamic microtubules. Required for the formation of mitotic and meiotic spindles. Specifically promotes the polymerization of kinetochore-bound microtubules. Also required for cytoplasmic streaming. In Caenorhabditis briggsae, this protein is Protein CLASP-2 (cls-2).